The primary structure comprises 198 residues: Peroxiredoxin-2 (198 aa).

Alanine 2 is subject to N-acetylalanine. A Thioredoxin domain is found at 6-164; that stretch reads ARIGKPAPDF…ALRLVQAFQY (159 aa). Cysteine 51 (cysteine sulfenic acid (-SOH) intermediate) is an active-site residue. Serine 112 is modified (phosphoserine). Phosphothreonine is present on threonine 182. Lysine 196 is modified (N6-acetyllysine).

The protein belongs to the peroxiredoxin family. AhpC/Prx1 subfamily. As to quaternary structure, homodimer; disulfide-linked, upon oxidation. 5 homodimers assemble to form a ring-like decamer. Interacts with TIPIN. Post-translationally, the enzyme can be inactivated by further oxidation of the cysteine sulfenic acid (C(P)-SOH) to sulphinic acid (C(P)-SO2H) instead of its condensation to a disulfide bond. It can be reactivated by forming a transient disulfide bond with sulfiredoxin SRXN1, which reduces the cysteine sulfinic acid in an ATP- and Mg-dependent manner. In terms of processing, acetylation increases resistance to transition to high molecular-mass complexes. Deacetylated by HDAC6 which decreases reducing activity.

Its subcellular location is the cytoplasm. It catalyses the reaction a hydroperoxide + [thioredoxin]-dithiol = an alcohol + [thioredoxin]-disulfide + H2O. Thiol-specific peroxidase that catalyzes the reduction of hydrogen peroxide and organic hydroperoxides to water and alcohols, respectively. Plays a role in cell protection against oxidative stress by detoxifying peroxides and as sensor of hydrogen peroxide-mediated signaling events. Might participate in the signaling cascades of growth factors and tumor necrosis factor-alpha by regulating the intracellular concentrations of H(2)O(2). The protein is Peroxiredoxin-2 (PRDX2) of Macaca fascicularis (Crab-eating macaque).